We begin with the raw amino-acid sequence, 602 residues long: MEKEVIAYLDNETIIDSQSVKNTNLKEIYFDNSKESLEVIRHSCAHLMAQAIKSLYPEAKFFVGPVIEDGFYYDFRVESKIGEEDLVKIEKKMKELAEAKIEISKYEITKSEALAKFQNDDLKQEVLLRIPDRAVSIYKQGEFEDLCRGPHVPNTKFLRFFKLTRVAGAYLGGDEKREMLTRIYGTAFADKESLKEYLTIIEEAKKRDHRKLGTELKLFTFDDEIGGGLPIWLSNGARLRSKLEHMLYKIHRLRGYEPVRGPELLKADAWKISGHYANYKENMYFTQIDEQEYGIKPMNCVGHIKIYQSDVRSYRDLPLKFFEYGVVHRHEKSGVLHGLFRVREFTQDDAHIFCMPSQIKEQVLEILAFVDNLMKLFDFSYEMEISTKPEKAIGDDEIWEIATKALKEALDEQGLKYGIDEGGGAFYGPKIDIKITDALKRKWQCGTIQVDFNLPSRFKLEYTDSDNEKKQPVMLHRAILGSFERFIGILTEHCAGEFPFFIAPTAVGIVPIGEAHIAYAKEIQKELLELNIDSEVYEKNESLSKKIRIAEKQKLPMILVLGDDEVAKRSVALRDRRAKEQKNLSLDEFIKLVKEKMSEVHF.

A catalytic region spans residues 208-499 (DHRKLGTELK…LTEHCAGEFP (292 aa)). The Zn(2+) site is built by C300, H351, and H476.

Belongs to the class-II aminoacyl-tRNA synthetase family. In terms of assembly, homodimer. Zn(2+) is required as a cofactor.

The protein localises to the cytoplasm. The catalysed reaction is tRNA(Thr) + L-threonine + ATP = L-threonyl-tRNA(Thr) + AMP + diphosphate + H(+). Catalyzes the attachment of threonine to tRNA(Thr) in a two-step reaction: L-threonine is first activated by ATP to form Thr-AMP and then transferred to the acceptor end of tRNA(Thr). Also edits incorrectly charged L-seryl-tRNA(Thr). The chain is Threonine--tRNA ligase from Campylobacter jejuni subsp. jejuni serotype O:2 (strain ATCC 700819 / NCTC 11168).